A 448-amino-acid polypeptide reads, in one-letter code: Probable glycine dehydrogenase (decarboxylating) subunit 1 (448 aa).

The protein belongs to the GcvP family. N-terminal subunit subfamily. As to quaternary structure, the glycine cleavage system is composed of four proteins: P, T, L and H. In this organism, the P 'protein' is a heterodimer of two subunits.

It catalyses the reaction N(6)-[(R)-lipoyl]-L-lysyl-[glycine-cleavage complex H protein] + glycine + H(+) = N(6)-[(R)-S(8)-aminomethyldihydrolipoyl]-L-lysyl-[glycine-cleavage complex H protein] + CO2. In terms of biological role, the glycine cleavage system catalyzes the degradation of glycine. The P protein binds the alpha-amino group of glycine through its pyridoxal phosphate cofactor; CO(2) is released and the remaining methylamine moiety is then transferred to the lipoamide cofactor of the H protein. The protein is Probable glycine dehydrogenase (decarboxylating) subunit 1 of Bacillus pumilus (strain SAFR-032).